A 404-amino-acid polypeptide reads, in one-letter code: UBP1-associated protein 2C (404 aa).

Residues 1–29 (MDMMKKRKLDENGNGLNTNGGGTIGPTRL) form a disordered region. 2 RRM domains span residues 75–152 (RKLF…LAAS) and 167–248 (RKIY…GKKG). Disordered regions lie at residues 246–270 (KKGGKPGMPQAQDGGSGHGHVHGEG) and 344–404 (GSGQ…PPNY).

Expressed in root apical and lateral meristems, young leaves and embryos.

The protein resides in the nucleus. Functionally, heterogeneous nuclear ribonucleoprotein (hnRNP)-like protein that acts as a component of a complex regulating the turnover of mRNAs in the nucleus. Binds with high affinity to RNA molecules that contain U-rich sequences in 3'-UTRs. May function in complex with UBP1 and contribute to the stabilization of mRNAs in the nucleus. The sequence is that of UBP1-associated protein 2C (UBA2C) from Arabidopsis thaliana (Mouse-ear cress).